The following is a 526-amino-acid chain: piRNA biogenesis factor prde-1 (526 aa).

The segment at 436 to 526 is disordered; the sequence is EAKEEPIDKK…RRRGCEIRRK (91 aa). The span at 439–448 shows a compositional bias: basic and acidic residues; sequence EEPIDKKKDP. A compositionally biased stretch (basic residues) spans 458–467; the sequence is GKKRRGRKPK. The segment covering 468–487 has biased composition (basic and acidic residues); that stretch reads KKDDPKMELKDEVKDLKDFV. Over residues 489 to 498 the composition is skewed to low complexity; that stretch reads EESTSASSSA.

In terms of tissue distribution, expressed in male and female germ cells.

Its subcellular location is the nucleus. The protein resides in the chromosome. Nuclear factor required for the production of piwi-interacting RNA (piRNA) precursors. Specifically required for piRNAs produced from loci associated with the Ruby motif. Promotes binding of the transcription factor snpc-4 at piRNA genomic clusters. Required for normal fertility. The chain is piRNA biogenesis factor prde-1 from Caenorhabditis elegans.